Reading from the N-terminus, the 498-residue chain is MRINPTTSSPVVSTLEEKNLGRIAQIIGPVLDVVFPPGKMPNIYNALVVKGRDTVGQQINVTCEVQQLLGNNRVRAVAMSATDGLMRGMEVIDTGAPLSVPVGGATLGRIFNVLGEPVDNLGPVDTRTTSPIHRSAPAFIQLDTKLSIFETGIKVVDLLAPYRRGGKIGLFGGAGVGKTVLIMELINNIAKAHGGVSVFGGVGERTREGNDLYMEMKESGVINEKNIAESKVALVYGQMNEPPGARMRVGLTALTMAEYFRDVNEQDVLLFIDNIFRFVQAGSEVSALLGRMPSAVGYQPTLSTEMGSLQERITSTKEGSITSIQAVYVPADDLTDPAPATTFAHLDATTVLSRVLAAKGIYPAVDPLDSTSTMLQPRIVGEEHYETAQRVKQTSQRYKELQDIIAILGLDELSEEDRLTVARARKIERFLSQPFFVAEVFTGSPGKYVGLAETIRGFQLILSGELDGLPEQAFYLVGNIDEATAKAMNLEVESKLNK.

ATP is bound at residue 172 to 179 (GGAGVGKT).

The protein belongs to the ATPase alpha/beta chains family. As to quaternary structure, F-type ATPases have 2 components, CF(1) - the catalytic core - and CF(0) - the membrane proton channel. CF(1) has five subunits: alpha(3), beta(3), gamma(1), delta(1), epsilon(1). CF(0) has four main subunits: a(1), b(1), b'(1) and c(9-12).

The protein localises to the plastid. Its subcellular location is the chloroplast thylakoid membrane. It carries out the reaction ATP + H2O + 4 H(+)(in) = ADP + phosphate + 5 H(+)(out). Produces ATP from ADP in the presence of a proton gradient across the membrane. The catalytic sites are hosted primarily by the beta subunits. This is ATP synthase subunit beta, chloroplastic from Hyophorbe lagenicaulis (Bottle palm).